A 101-amino-acid polypeptide reads, in one-letter code: uncharacterized protein (101 aa).

Residues 1–12 (MAAFQHRAKRSK) are compositionally biased toward basic residues. Disordered regions lie at residues 1–30 (MAAF…KKRA) and 65–87 (AQDQ…NVDK). Positions 65–78 (AQDQRSDAQAQQQR) are enriched in low complexity.

This is an uncharacterized protein from Eremothecium gossypii (strain ATCC 10895 / CBS 109.51 / FGSC 9923 / NRRL Y-1056) (Yeast).